We begin with the raw amino-acid sequence, 914 residues long: Protein ECT2 (914 aa).

At Ala2 the chain carries N-acetylalanine. BRCT domains are found at residues Leu171 to Asp260 and Phe266 to Tyr354. Thr359 carries the phosphothreonine; by PKC/PRKCI modification. Phosphoserine occurs at positions 367 and 370. Thr373 is modified (phosphothreonine; by CDK1). Residue Ser376 is modified to Phosphoserine. 2 consecutive short sequence motifs (nuclear localization signal) follow at residues Arg378–Arg382 and Pro401–Pro405. The segment at Ala388–Lys449 is disordered. Positions Asp418–Tyr429 are enriched in polar residues. Residues Thr432–Lys449 are compositionally biased toward low complexity. Residue Thr444 is modified to Phosphothreonine; by CDK1. Residues Ala452–Asp641 enclose the DH domain. A Glycyl lysine isopeptide (Lys-Gly) (interchain with G-Cter in SUMO2) cross-link involves residue Lys611. Residues Arg675 to Thr794 form the PH domain. Phosphoserine is present on residues Ser716 and Ser842. Thr846 carries the post-translational modification Phosphothreonine; by CDK1. Residues Thr857–Leu884 are disordered. Phosphoserine is present on residues Ser861 and Ser866.

Homodimer. Homooligomer. Found in the centralspindlin complex. Interacts with NR1I3. Interacts (Thr-359 phosphorylated form) with PARD6A; the interaction is observed in cancer cells. Interacts (Thr-359 phosphorylated form) with PRKCI; the interaction is observed in cancer cells. Interacts with PKP4; the interaction is observed at the midbody. Interacts with RACGAP1/CYK4; the interaction is direct, occurs in a microtubule-dependent manner, occurs at anaphase and during cytokinesis, is inhibited in metaphase by phosphorylation of ECT2 on Thr-373 and is stimulated in early anaphase by dephosphorylation of ECT2 probably on Thr-373 through CDK1 activity. Interacts with PLK1; the interaction is stimulated upon its phosphorylation on Thr-444. Interacts with RHOA; the interaction results in allosteric activation of ECT2. Interacts with KIF23, PARD3, PARD6B and PRKCQ. Interacts with NEDD9/HEF1. Phosphorylated by PLK1 in vitro. Hyperphosphorylated during the G2 phase of the cell cycle. Phosphorylation at Thr-373 occurs during the G2/M phase, relieves its auto-inhibition status and stimulates its GEF activity. Phosphorylation at Thr-444 in G2/M phase is required for subsequent binding with PLK1 and Rho exchange activation. Dephosphorylated at the time of cytokinesis. Phosphorylation at Thr-359 is required for its transformation activity in cancer cells. Expressed in lung epithelial cells (at protein level). Expressed in squamous cell carcinoma, primary non-small cell lung cancer tumors and lung adenocarcinoma.

The protein localises to the nucleus. Its subcellular location is the cytoplasm. It is found in the cytoskeleton. It localises to the spindle. The protein resides in the cleavage furrow. The protein localises to the midbody. Its subcellular location is the cell junction. It is found in the tight junction. It localises to the microtubule organizing center. The protein resides in the centrosome. With respect to regulation, autoinhibited by the C-terminal PH domain which folds back and binds to the surface of the DH domain, blocking binding of RHOA to the catalytic center of the DH domain. The 2nd BRCT domain is also involved in inhibition, probably by helping to impede RHOA binding. Allosterically activated by binding of activated GTP-bound RHOA to the PH domain which stimulates the release of PH inhibition and promotes the binding of substrate RHOA to the catalytic center. Binding of phosphorylated RACGAP1 to the N-terminal BRCT domain-containing region also releases autoinhibition. Functionally, guanine nucleotide exchange factor (GEF) that catalyzes the exchange of GDP for GTP. Promotes guanine nucleotide exchange on the Rho family members of small GTPases, like RHOA, RHOC, RAC1 and CDC42. Required for signal transduction pathways involved in the regulation of cytokinesis. Component of the centralspindlin complex that serves as a microtubule-dependent and Rho-mediated signaling required for the myosin contractile ring formation during the cell cycle cytokinesis. Regulates the translocation of RHOA from the central spindle to the equatorial region. Plays a role in the control of mitotic spindle assembly; regulates the activation of CDC42 in metaphase for the process of spindle fibers attachment to kinetochores before chromosome congression. Involved in the regulation of epithelial cell polarity; participates in the formation of epithelial tight junctions in a polarity complex PARD3-PARD6-protein kinase PRKCQ-dependent manner. Plays a role in the regulation of neurite outgrowth. Inhibits phenobarbital (PB)-induced NR1I3 nuclear translocation. Stimulates the activity of RAC1 through its association with the oncogenic PARD6A-PRKCI complex in cancer cells, thereby acting to coordinately drive tumor cell proliferation and invasion. Also stimulates genotoxic stress-induced RHOB activity in breast cancer cells leading to their cell death. The chain is Protein ECT2 from Homo sapiens (Human).